A 171-amino-acid polypeptide reads, in one-letter code: Phosphopantetheine adenylyltransferase (171 aa).

Residue T9 coordinates substrate. Residues 9 to 10 (TF) and H17 each bind ATP. K41, L78, and R92 together coordinate substrate. ATP contacts are provided by residues 93–95 (GLR), E103, and 128–134 (HQAIASK).

This sequence belongs to the bacterial CoaD family. As to quaternary structure, homohexamer. Mg(2+) serves as cofactor.

The protein resides in the cytoplasm. It catalyses the reaction (R)-4'-phosphopantetheine + ATP + H(+) = 3'-dephospho-CoA + diphosphate. It functions in the pathway cofactor biosynthesis; coenzyme A biosynthesis; CoA from (R)-pantothenate: step 4/5. Functionally, reversibly transfers an adenylyl group from ATP to 4'-phosphopantetheine, yielding dephospho-CoA (dPCoA) and pyrophosphate. This Dinoroseobacter shibae (strain DSM 16493 / NCIMB 14021 / DFL 12) protein is Phosphopantetheine adenylyltransferase.